The following is a 547-amino-acid chain: Chorismate synthase (547 aa).

Catalysis depends on residues H17, H104, and D500.

Belongs to the chorismate synthase family.

It is found in the cytoplasm. It localises to the cytosol. The catalysed reaction is 5-O-(1-carboxyvinyl)-3-phosphoshikimate = chorismate + phosphate. It catalyses the reaction FMNH2 + NADP(+) = FMN + NADPH + 2 H(+). It participates in metabolic intermediate biosynthesis; chorismate biosynthesis; chorismate from D-erythrose 4-phosphate and phosphoenolpyruvate: step 7/7. Bifunctional chorismate synthase and flavin reductase. Catalyzes the conversion of 5-enolpyruvylshikimate 3-phosphate (EPSP) to form chorismate. Acts also as a flavin reductase (FR) able to generate reduced flavin mononucleotide in the presence of NADPH. The sequence is that of Chorismate synthase from Plasmodium vivax (strain Salvador I).